The primary structure comprises 84 residues: Small ribosomal subunit protein bS20 (84 aa).

It belongs to the bacterial ribosomal protein bS20 family.

In terms of biological role, binds directly to 16S ribosomal RNA. This chain is Small ribosomal subunit protein bS20, found in Limosilactobacillus reuteri (strain DSM 20016) (Lactobacillus reuteri).